A 378-amino-acid chain; its full sequence is Putative glutamate--cysteine ligase 2 (378 aa).

The protein belongs to the glutamate--cysteine ligase type 2 family. YbdK subfamily.

It carries out the reaction L-cysteine + L-glutamate + ATP = gamma-L-glutamyl-L-cysteine + ADP + phosphate + H(+). Its function is as follows. ATP-dependent carboxylate-amine ligase which exhibits weak glutamate--cysteine ligase activity. The chain is Putative glutamate--cysteine ligase 2 from Salinispora tropica (strain ATCC BAA-916 / DSM 44818 / JCM 13857 / NBRC 105044 / CNB-440).